Here is a 197-residue protein sequence, read N- to C-terminus: dITP/XTP pyrophosphatase (197 aa).

Position 8 to 13 (8 to 13 (TGNPGK)) interacts with substrate. The Mg(2+) site is built by Glu-40 and Asp-69. The active-site Proton acceptor is the Asp-69. Residues Ser-70, 154 to 157 (FGYD), Lys-177, and 182 to 183 (HR) each bind substrate.

It belongs to the HAM1 NTPase family. In terms of assembly, homodimer. Requires Mg(2+) as cofactor.

It carries out the reaction XTP + H2O = XMP + diphosphate + H(+). It catalyses the reaction dITP + H2O = dIMP + diphosphate + H(+). The catalysed reaction is ITP + H2O = IMP + diphosphate + H(+). Functionally, pyrophosphatase that catalyzes the hydrolysis of nucleoside triphosphates to their monophosphate derivatives, with a high preference for the non-canonical purine nucleotides XTP (xanthosine triphosphate), dITP (deoxyinosine triphosphate) and ITP. Seems to function as a house-cleaning enzyme that removes non-canonical purine nucleotides from the nucleotide pool, thus preventing their incorporation into DNA/RNA and avoiding chromosomal lesions. The polypeptide is dITP/XTP pyrophosphatase (Yersinia pseudotuberculosis serotype I (strain IP32953)).